Here is a 157-residue protein sequence, read N- to C-terminus: UPF0262 protein Avi_0642 (157 aa).

Belongs to the UPF0262 family.

The sequence is that of UPF0262 protein Avi_0642 from Allorhizobium ampelinum (strain ATCC BAA-846 / DSM 112012 / S4) (Agrobacterium vitis (strain S4)).